Reading from the N-terminus, the 379-residue chain is Probable pectin lyase A (379 aa).

A signal peptide spans 1 to 19 (MKFALLSGVAAGLLPVVSA). Intrachain disulfides connect cysteine 82-cysteine 101 and cysteine 91-cysteine 225. Residue arginine 255 is part of the active site. A disulfide bridge links cysteine 322 with cysteine 330.

It belongs to the polysaccharide lyase 1 family.

It localises to the secreted. The enzyme catalyses Eliminative cleavage of (1-&gt;4)-alpha-D-galacturonan methyl ester to give oligosaccharides with 4-deoxy-6-O-methyl-alpha-D-galact-4-enuronosyl groups at their non-reducing ends.. Pectinolytic enzymes consist of four classes of enzymes: pectin lyase, polygalacturonase, pectin methylesterase and rhamnogalacturonase. Among pectinolytic enzymes, pectin lyase is the most important in depolymerization of pectin, since it cleaves internal glycosidic bonds of highly methylated pectins. This chain is Probable pectin lyase A (pelA), found in Aspergillus oryzae (strain ATCC 42149 / RIB 40) (Yellow koji mold).